A 152-amino-acid chain; its full sequence is METTTTKKPYEVVVLMHPDASLEEQKDLFKKNKATIESYKGSINSLETWGKRTLATPIGKLKKAIYFHSTFEADTQAIAELERTMRINDKVLRFMHTRLDERTSLGKFMEGFKKGLAESAAREKEREAKAAARKAAFAAAKAERSERYDKGE.

It belongs to the bacterial ribosomal protein bS6 family.

In terms of biological role, binds together with bS18 to 16S ribosomal RNA. This Bdellovibrio bacteriovorus (strain ATCC 15356 / DSM 50701 / NCIMB 9529 / HD100) protein is Small ribosomal subunit protein bS6.